A 490-amino-acid polypeptide reads, in one-letter code: UDP-N-acetylmuramate--L-alanine ligase (490 aa).

133–139 (GTHGKTS) contributes to the ATP binding site.

Belongs to the MurCDEF family.

The protein localises to the cytoplasm. The catalysed reaction is UDP-N-acetyl-alpha-D-muramate + L-alanine + ATP = UDP-N-acetyl-alpha-D-muramoyl-L-alanine + ADP + phosphate + H(+). It participates in cell wall biogenesis; peptidoglycan biosynthesis. Functionally, cell wall formation. The polypeptide is UDP-N-acetylmuramate--L-alanine ligase (Saccharopolyspora erythraea (strain ATCC 11635 / DSM 40517 / JCM 4748 / NBRC 13426 / NCIMB 8594 / NRRL 2338)).